The chain runs to 245 residues: Carbohydrate deacetylase 1 (245 aa).

Positions 59 and 125 each coordinate Mg(2+).

This sequence belongs to the YdjC deacetylase family. In terms of assembly, homodimer. The cofactor is Mg(2+).

Functionally, probably catalyzes the deacetylation of acetylated carbohydrates an important step in the degradation of oligosaccharides. The chain is Carbohydrate deacetylase 1 from Listeria innocua serovar 6a (strain ATCC BAA-680 / CLIP 11262).